We begin with the raw amino-acid sequence, 298 residues long: tRNA-uridine aminocarboxypropyltransferase 2 (298 aa).

Met1 carries the N-acetylmethionine modification. Basic and acidic residues predominate over residues 1–10; it reads MEPQAEERTL. Residues 1–55 form a disordered region; it reads MEPQAEERTLGEPAPPPSGALASPTPDEEERTEGGAPPTATPAGASGDSTSADGL. Over residues 34-45 the composition is skewed to low complexity; sequence GGAPPTATPAGA. Residue Ser132 is modified to Phosphoserine. The DXTW signature appears at 178 to 181; the sequence is DGTW.

This sequence belongs to the TDD superfamily. DTWD2 family.

It localises to the nucleus. It is found in the cytoplasm. The catalysed reaction is a uridine in tRNA + S-adenosyl-L-methionine = a 3-[(3S)-3-amino-3-carboxypropyl]uridine in tRNA + S-methyl-5'-thioadenosine + H(+). In terms of biological role, catalyzes the formation of 3-(3-amino-3-carboxypropyl)uridine (acp3U) at position 20a in the D-loop of several cytoplasmic tRNAs (acp3U(20a)). Also has a weak activity to form acp3U at position 20 in the D-loop of tRNAs (acp3U(20)). Involved in glycoRNA biosynthesis by mediating formation of acp3U, which acts as an attachment site for N-glycans on tRNAs. GlycoRNAs consist of RNAs modified with secretory N-glycans that are presented on the cell surface. The sequence is that of tRNA-uridine aminocarboxypropyltransferase 2 from Mus musculus (Mouse).